A 168-amino-acid chain; its full sequence is Photosystem I assembly protein Ycf3 (168 aa).

3 TPR repeats span residues 35 to 68, 72 to 105, and 120 to 153; these read AFTY…EIDP, SYIL…NPFL, and GEQA…TPGN.

Belongs to the Ycf3 family.

It localises to the plastid. It is found in the chloroplast thylakoid membrane. Its function is as follows. Essential for the assembly of the photosystem I (PSI) complex. May act as a chaperone-like factor to guide the assembly of the PSI subunits. This chain is Photosystem I assembly protein Ycf3, found in Daucus carota (Wild carrot).